The following is a 249-amino-acid chain: Ribosomal RNA small subunit methyltransferase J (249 aa).

S-adenosyl-L-methionine is bound by residues 99–100 (RD), 115–116 (ER), 151–152 (SS), and Asp-169.

It belongs to the methyltransferase superfamily. RsmJ family.

Its subcellular location is the cytoplasm. It carries out the reaction guanosine(1516) in 16S rRNA + S-adenosyl-L-methionine = N(2)-methylguanosine(1516) in 16S rRNA + S-adenosyl-L-homocysteine + H(+). Specifically methylates the guanosine in position 1516 of 16S rRNA. This is Ribosomal RNA small subunit methyltransferase J from Shewanella oneidensis (strain ATCC 700550 / JCM 31522 / CIP 106686 / LMG 19005 / NCIMB 14063 / MR-1).